Consider the following 226-residue polypeptide: Large ribosomal subunit protein uL3 (226 aa).

Position 160 is an N5-methylglutamine (Q160).

It belongs to the universal ribosomal protein uL3 family. As to quaternary structure, part of the 50S ribosomal subunit. Forms a cluster with proteins L14 and L19. Methylated by PrmB.

Its function is as follows. One of the primary rRNA binding proteins, it binds directly near the 3'-end of the 23S rRNA, where it nucleates assembly of the 50S subunit. The sequence is that of Large ribosomal subunit protein uL3 from Leptothrix cholodnii (strain ATCC 51168 / LMG 8142 / SP-6) (Leptothrix discophora (strain SP-6)).